The following is a 188-amino-acid chain: Elongation factor P (188 aa).

Belongs to the elongation factor P family.

It localises to the cytoplasm. The protein operates within protein biosynthesis; polypeptide chain elongation. Functionally, involved in peptide bond synthesis. Stimulates efficient translation and peptide-bond synthesis on native or reconstituted 70S ribosomes in vitro. Probably functions indirectly by altering the affinity of the ribosome for aminoacyl-tRNA, thus increasing their reactivity as acceptors for peptidyl transferase. The protein is Elongation factor P of Gluconacetobacter diazotrophicus (strain ATCC 49037 / DSM 5601 / CCUG 37298 / CIP 103539 / LMG 7603 / PAl5).